Consider the following 358-residue polypeptide: Magnesium-protoporphyrin IX monomethyl ester [oxidative] cyclase 1 (358 aa).

This sequence belongs to the AcsF family. Requires Fe cation as cofactor.

The enzyme catalyses Mg-protoporphyrin IX 13-monomethyl ester + 3 NADPH + 3 O2 + 2 H(+) = 3,8-divinyl protochlorophyllide a + 3 NADP(+) + 5 H2O. The protein operates within porphyrin-containing compound metabolism; chlorophyll biosynthesis (light-independent). Catalyzes the formation of the isocyclic ring in chlorophyll biosynthesis. Mediates the cyclase reaction, which results in the formation of divinylprotochlorophyllide (Pchlide) characteristic of all chlorophylls from magnesium-protoporphyrin IX 13-monomethyl ester (MgPMME). In Synechocystis sp. (strain ATCC 27184 / PCC 6803 / Kazusa), this protein is Magnesium-protoporphyrin IX monomethyl ester [oxidative] cyclase 1.